We begin with the raw amino-acid sequence, 359 residues long: Spermine synthase (359 aa).

The region spanning 53–304 (SGWFSEPHPR…GVIGFVLCST (252 aa)) is the PABS domain. Q99 is a binding site for S-adenosyl 3-(methylsulfanyl)propylamine. Residue Y129 coordinates spermidine. Q130 contacts S-adenosyl 3-(methylsulfanyl)propylamine. Spermidine is bound at residue D154. Residues E174 and 205-206 (DA) each bind S-adenosyl 3-(methylsulfanyl)propylamine. D224 functions as the Proton acceptor in the catalytic mechanism. Y292 provides a ligand contact to putrescine.

It belongs to the spermidine/spermine synthase family. Heterodimer. Component of a multiprotein complex. Interacts with SPDSYN1 and SPDSYN2. In terms of tissue distribution, expressed predominantly in stem internodes, flower buds and roots.

The catalysed reaction is S-adenosyl 3-(methylsulfanyl)propylamine + spermidine = spermine + S-methyl-5'-thioadenosine + H(+). Its pathway is amine and polyamine biosynthesis; spermine biosynthesis; spermine from spermidine: step 1/1. The protein is Spermine synthase (SPMS) of Arabidopsis thaliana (Mouse-ear cress).